Consider the following 287-residue polypeptide: Bifunctional protein FolD (287 aa).

NADP(+)-binding positions include 165–167, Ser190, and Ile231; that span reads GRS.

The protein belongs to the tetrahydrofolate dehydrogenase/cyclohydrolase family. In terms of assembly, homodimer.

The enzyme catalyses (6R)-5,10-methylene-5,6,7,8-tetrahydrofolate + NADP(+) = (6R)-5,10-methenyltetrahydrofolate + NADPH. The catalysed reaction is (6R)-5,10-methenyltetrahydrofolate + H2O = (6R)-10-formyltetrahydrofolate + H(+). The protein operates within one-carbon metabolism; tetrahydrofolate interconversion. Functionally, catalyzes the oxidation of 5,10-methylenetetrahydrofolate to 5,10-methenyltetrahydrofolate and then the hydrolysis of 5,10-methenyltetrahydrofolate to 10-formyltetrahydrofolate. This chain is Bifunctional protein FolD, found in Trichodesmium erythraeum (strain IMS101).